The following is a 509-amino-acid chain: DEAD-box ATP-dependent RNA helicase CshA (509 aa).

Positions 2-30 match the Q motif motif; sequence QNFKELGISDKTVQTLEAMGFKEPTPIQK. Residues 33 to 203 form the Helicase ATP-binding domain; that stretch reads IPYALEGDDI…QQFMKAPKII (171 aa). Residue 46–53 coordinates ATP; sequence AQTGTGKT. The short motif at 150–153 is the DEAD box element; the sequence is DEAD. The Helicase C-terminal domain occupies 214-375; that stretch reads QIDEYYTIVK…LRPPHRKEVL (162 aa). Basic residues-rich tracts occupy residues 440–459 and 467–482; these read ARKNRSSKGGSRRSNHKRGN and RRSKGSKGQSSKKKNQ. The interval 440–509 is disordered; the sequence is ARKNRSSKGG…KGRTFADHQK (70 aa). The span at 483-492 shows a compositional bias: basic and acidic residues; sequence KKFDRRDKQQ.

The protein belongs to the DEAD box helicase family. CshA subfamily. Oligomerizes, may be a member of the RNA degradosome.

It is found in the cytoplasm. It carries out the reaction ATP + H2O = ADP + phosphate + H(+). Its function is as follows. DEAD-box RNA helicase possibly involved in RNA degradation. Unwinds dsRNA in both 5'- and 3'-directions, has RNA-dependent ATPase activity. In Staphylococcus epidermidis (strain ATCC 12228 / FDA PCI 1200), this protein is DEAD-box ATP-dependent RNA helicase CshA.